Consider the following 218-residue polypeptide: Large ribosomal subunit protein uL3 (218 aa).

It belongs to the universal ribosomal protein uL3 family. Part of the 50S ribosomal subunit. Forms a cluster with proteins L14 and L19.

Functionally, one of the primary rRNA binding proteins, it binds directly near the 3'-end of the 23S rRNA, where it nucleates assembly of the 50S subunit. In Corynebacterium diphtheriae (strain ATCC 700971 / NCTC 13129 / Biotype gravis), this protein is Large ribosomal subunit protein uL3.